Here is a 287-residue protein sequence, read N- to C-terminus: 4-hydroxybenzoate octaprenyltransferase (287 aa).

Transmembrane regions (helical) follow at residues 21–41 (VGIF…AKGA), 44–64 (FKIA…GCIV), 91–111 (VTEA…LVLL), 112–132 (LNRL…VYPF), 139–159 (LPQL…FAAT), 160–180 (VGHV…WPIV), 211–231 (LMIG…GWYL), 235–255 (YWFY…QFLI), and 263–283 (CFAA…GILL).

The protein belongs to the UbiA prenyltransferase family. Requires Mg(2+) as cofactor.

The protein resides in the cell inner membrane. It carries out the reaction all-trans-octaprenyl diphosphate + 4-hydroxybenzoate = 4-hydroxy-3-(all-trans-octaprenyl)benzoate + diphosphate. The protein operates within cofactor biosynthesis; ubiquinone biosynthesis. Catalyzes the prenylation of para-hydroxybenzoate (PHB) with an all-trans polyprenyl group. Mediates the second step in the final reaction sequence of ubiquinone-8 (UQ-8) biosynthesis, which is the condensation of the polyisoprenoid side chain with PHB, generating the first membrane-bound Q intermediate 3-octaprenyl-4-hydroxybenzoate. This Coxiella burnetii (strain RSA 331 / Henzerling II) protein is 4-hydroxybenzoate octaprenyltransferase.